We begin with the raw amino-acid sequence, 54 residues long: Ovomucoid (54 aa).

The Kazal-like domain maps to 4–54; sequence VDCSDYPKPSCTLEDKPLCGSDNQTYSNKCSFCNAVVDSNGTLTLSHFGKC. Cystine bridges form between Cys6–Cys36, Cys14–Cys33, and Cys22–Cys54. Asn43 is a glycosylation site (N-linked (GlcNAc...) asparagine).

The protein resides in the secreted. The polypeptide is Ovomucoid (Megapodius freycinet (Dusky scrubfowl)).